The primary structure comprises 411 residues: Multifunctional CCA protein (411 aa).

Positions 8 and 11 each coordinate ATP. CTP contacts are provided by Gly-8 and Arg-11. The Mg(2+) site is built by Asp-21 and Asp-23. Positions 91, 137, and 140 each coordinate ATP. CTP is bound by residues Arg-91, Arg-137, and Arg-140. Positions 226-327 (TGVHVMLVID…LRFLQETDAL (102 aa)) constitute an HD domain.

It belongs to the tRNA nucleotidyltransferase/poly(A) polymerase family. Bacterial CCA-adding enzyme type 1 subfamily. As to quaternary structure, monomer. Can also form homodimers and oligomers. Requires Mg(2+) as cofactor. Ni(2+) is required as a cofactor.

It catalyses the reaction a tRNA precursor + 2 CTP + ATP = a tRNA with a 3' CCA end + 3 diphosphate. The catalysed reaction is a tRNA with a 3' CCA end + 2 CTP + ATP = a tRNA with a 3' CCACCA end + 3 diphosphate. In terms of biological role, catalyzes the addition and repair of the essential 3'-terminal CCA sequence in tRNAs without using a nucleic acid template. Adds these three nucleotides in the order of C, C, and A to the tRNA nucleotide-73, using CTP and ATP as substrates and producing inorganic pyrophosphate. tRNA 3'-terminal CCA addition is required both for tRNA processing and repair. Also involved in tRNA surveillance by mediating tandem CCA addition to generate a CCACCA at the 3' terminus of unstable tRNAs. While stable tRNAs receive only 3'-terminal CCA, unstable tRNAs are marked with CCACCA and rapidly degraded. The sequence is that of Multifunctional CCA protein from Methylobacillus flagellatus (strain ATCC 51484 / DSM 6875 / VKM B-1610 / KT).